The following is a 737-amino-acid chain: Pentatricopeptide repeat-containing protein At3g49740 (737 aa).

PPR repeat units lie at residues 20–55 (TLLN…TLRP), 56–90 (DQYS…GLLC), 91–121 (HSHV…IDEP), 122–152 (DVYS…MPER), 154–188 (DVAI…GVRH), 189–222 (DKFG…GFFI), 223–253 (ASSV…TDVA), 256–289 (DQVT…SLRP), 290–321 (TDLT…GYEK), 322–352 (YTLV…LEEK), 353–387 (DLVT…GVKP), 388–418 (DEFT…FGLS), 420–454 (KIEI…NLIS), 455–485 (WNAI…EVRI), 488–522 (DAYT…GQFK), 523–553 (ETLI…MSEK), 554–588 (DVVS…GKVI), 590–620 (DAAT…MVEF), and 626–656 (NVDH…SEKT). Residues 663 to 737 (VWWALFSACA…KQRGCSWMRL (75 aa)) are type E motif; degenerate.

It belongs to the PPR family. PCMP-E subfamily.

This is Pentatricopeptide repeat-containing protein At3g49740 (PCMP-E84) from Arabidopsis thaliana (Mouse-ear cress).